The sequence spans 259 residues: Sorbitol-6-phosphate 2-dehydrogenase (259 aa).

Residue 4–33 coordinates NAD(+); it reads VAVVIGGGQTLGAFLCHGLAAEGYRVAVVD. Substrate is bound at residue Ser-141. Tyr-154 serves as the catalytic Proton acceptor.

Belongs to the short-chain dehydrogenases/reductases (SDR) family. In terms of assembly, homotetramer.

The catalysed reaction is D-sorbitol 6-phosphate + NAD(+) = beta-D-fructose 6-phosphate + NADH + H(+). The protein operates within carbohydrate metabolism; D-sorbitol degradation; D-fructose 6-phosphate from D-sorbitol 6-phosphate: step 1/1. The polypeptide is Sorbitol-6-phosphate 2-dehydrogenase (srlD) (Escherichia coli (strain K12)).